The following is a 310-amino-acid chain: GTP-binding protein GTR1 (310 aa).

Residues S15, G18, K19, S20, S21, T35, T41, G64, H126, D129, and I166 each contribute to the GTP site.

Belongs to the GTR/RAG GTP-binding protein family. As to quaternary structure, heterodimer; with GTR2. Component of the GSE complex composed of GTR1, GTR2, SLM4, MEH1 and LTV1. Interacts with GTR2; the interaction is direct. Interacts with TOR1.

It is found in the vacuole membrane. The enzyme catalyses GTP + H2O = GDP + phosphate + H(+). GTPase involved in activation of the TORC1 signaling pathway, which promotes growth and represses autophagy in nutrient-rich conditions. Also required for TORC1 inactivation during nitrogen starvation. Required for intracellular sorting of GAP1 out of the endosome. Functionally associated with the inorganic phosphate transporter PHO84, and may be involved in regulating its function or localization. In Saccharomyces cerevisiae (strain ATCC 204508 / S288c) (Baker's yeast), this protein is GTP-binding protein GTR1 (GTR1).